The following is a 784-amino-acid chain: LPS-assembly protein LptD (784 aa).

The N-terminal stretch at 1–24 is a signal peptide; that stretch reads MKKRIPTLLATMIATALYSQQGLA. 2 disulfide bridges follow: Cys-31–Cys-724 and Cys-173–Cys-725.

The protein belongs to the LptD family. In terms of assembly, component of the lipopolysaccharide transport and assembly complex. Interacts with LptE and LptA. Contains two intramolecular disulfide bonds.

It is found in the cell outer membrane. Together with LptE, is involved in the assembly of lipopolysaccharide (LPS) at the surface of the outer membrane. The chain is LPS-assembly protein LptD from Escherichia coli O157:H7.